Reading from the N-terminus, the 338-residue chain is Nicotinate-nucleotide--dimethylbenzimidazole phosphoribosyltransferase (338 aa).

Catalysis depends on Glu305, which acts as the Proton acceptor.

It belongs to the CobT family.

It catalyses the reaction 5,6-dimethylbenzimidazole + nicotinate beta-D-ribonucleotide = alpha-ribazole 5'-phosphate + nicotinate + H(+). Its pathway is nucleoside biosynthesis; alpha-ribazole biosynthesis; alpha-ribazole from 5,6-dimethylbenzimidazole: step 1/2. Catalyzes the synthesis of alpha-ribazole-5'-phosphate from nicotinate mononucleotide (NAMN) and 5,6-dimethylbenzimidazole (DMB). The chain is Nicotinate-nucleotide--dimethylbenzimidazole phosphoribosyltransferase from Rhizobium johnstonii (strain DSM 114642 / LMG 32736 / 3841) (Rhizobium leguminosarum bv. viciae).